The following is a 398-amino-acid chain: Putative F-box/kelch-repeat protein At2g29780 (398 aa).

The segment at 1–46 (MAIISETSDDGSHGGVPNKKPEELHKNPKEDDHQEEEVENHPPIPR) is disordered. Over residues 19–32 (KKPEELHKNPKEDD) the composition is skewed to basic and acidic residues. An F-box domain is found at 43–90 (PIPRQIPQALIRRTVALIKRCHYPSLSLLSKAFRIVISSPELHQTRSS). 4 Kelch repeats span residues 148–195 (KMYV…VING), 196–241 (KIYV…GFVT), 243–289 (VVMQ…VIED), and 295–342 (DPYC…GGKL).

The protein is Putative F-box/kelch-repeat protein At2g29780 of Arabidopsis thaliana (Mouse-ear cress).